We begin with the raw amino-acid sequence, 318 residues long: NAD(P)H-dependent D-xylose reductase (318 aa).

Residue tyrosine 48 is the Proton donor of the active site. Position 110 (histidine 110) interacts with substrate. NAD(+) is bound by residues 165–166 (SN), 214–223 (SSFGPQSFVE), and 270–280 (KSNTVPRLLEN).

It belongs to the aldo/keto reductase family.

The catalysed reaction is xylitol + NAD(+) = D-xylose + NADH + H(+). The enzyme catalyses xylitol + NADP(+) = D-xylose + NADPH + H(+). It functions in the pathway carbohydrate metabolism; D-xylose degradation. Its activity is regulated as follows. NADP(+) is a potent inhibitor of both the NADPH- and NADH-linked xylose reduction, whereas NAD(+) showS strong inhibition only with the NADH-linked reaction. Its function is as follows. Reduces D-xylose into xylitol. Has a preference for NADPH, but can also utilize NADH as cosubstrate. The chain is NAD(P)H-dependent D-xylose reductase (XYL1) from Scheffersomyces stipitis (strain ATCC 58785 / CBS 6054 / NBRC 10063 / NRRL Y-11545) (Yeast).